Here is a 265-residue protein sequence, read N- to C-terminus: Protein Exd1 homolog (265 aa).

Positions 32–82 (EKQLDRIVLIYQVDTTYHSALKDIKDQKIISLLVEPSFYGRHHPTSILVVA) constitute a 3'-5' exonuclease domain.

Belongs to the EXD1 family. Homodimer.

In terms of biological role, RNA-binding protein. Inactive exonuclease. The sequence is that of Protein Exd1 homolog from Drosophila melanogaster (Fruit fly).